The following is a 273-amino-acid chain: Cilia- and flagella-associated protein 298-B (273 aa).

Belongs to the CFAP298 family.

It is found in the cytoplasm. It localises to the cytoskeleton. The protein resides in the cilium basal body. Plays a role in motile cilium function, possibly by acting on outer dynein arm assembly. Seems to be important for initiation rather than maintenance of cilium motility. Required for correct positioning of the cilium at the apical cell surface, suggesting an additional role in the planar cell polarity (PCP) pathway. May suppress canonical Wnt signaling activity. The protein is Cilia- and flagella-associated protein 298-B (cfap298-b) of Xenopus laevis (African clawed frog).